A 500-amino-acid chain; its full sequence is Glucose-1-phosphate adenylyltransferase large subunit, chloroplastic/amyloplastic (500 aa).

The N-terminal 33 residues, 1 to 33, are a transit peptide targeting the chloroplast; it reads RASPPSESRAPLRAPQRSATRQHQARQGPRRMC. Positions 1–47 are disordered; it reads RASPPSESRAPLRAPQRSATRQHQARQGPRRMCNGGRGPPYWTAGVT.

Belongs to the bacterial/plant glucose-1-phosphate adenylyltransferase family. Heterotetramer.

The protein resides in the plastid. It localises to the chloroplast. The protein localises to the amyloplast. The enzyme catalyses alpha-D-glucose 1-phosphate + ATP + H(+) = ADP-alpha-D-glucose + diphosphate. Its pathway is glycan biosynthesis; starch biosynthesis. Its activity is regulated as follows. Insensitive to 3'phosphoglycerate and orthophosphate. This protein plays a role in synthesis of starch. It catalyzes the synthesis of the activated glycosyl donor, ADP-glucose from Glc-1-P and ATP. This Triticum aestivum (Wheat) protein is Glucose-1-phosphate adenylyltransferase large subunit, chloroplastic/amyloplastic (AGA.7).